A 231-amino-acid polypeptide reads, in one-letter code: 4-hydroxy-tetrahydrodipicolinate reductase (231 aa).

NAD(+) contacts are provided by residues Asp-33, 68 to 70 (CTT), and 92 to 95 (SSNT). His-124 (proton donor/acceptor) is an active-site residue. His-125 provides a ligand contact to (S)-2,3,4,5-tetrahydrodipicolinate. Lys-128 functions as the Proton donor in the catalytic mechanism. 134-135 (GT) contributes to the (S)-2,3,4,5-tetrahydrodipicolinate binding site.

The protein belongs to the DapB family.

The protein resides in the cytoplasm. The catalysed reaction is (S)-2,3,4,5-tetrahydrodipicolinate + NAD(+) + H2O = (2S,4S)-4-hydroxy-2,3,4,5-tetrahydrodipicolinate + NADH + H(+). It carries out the reaction (S)-2,3,4,5-tetrahydrodipicolinate + NADP(+) + H2O = (2S,4S)-4-hydroxy-2,3,4,5-tetrahydrodipicolinate + NADPH + H(+). Its pathway is amino-acid biosynthesis; L-lysine biosynthesis via DAP pathway; (S)-tetrahydrodipicolinate from L-aspartate: step 4/4. Catalyzes the conversion of 4-hydroxy-tetrahydrodipicolinate (HTPA) to tetrahydrodipicolinate. The protein is 4-hydroxy-tetrahydrodipicolinate reductase of Brachyspira hyodysenteriae (strain ATCC 49526 / WA1).